We begin with the raw amino-acid sequence, 469 residues long: Phosphatidylinositol 4-kinase type 2-alpha (469 aa).

Disordered stretches follow at residues 1–30 (MDET…ATVP) and 50–72 (TATS…DQER). A compositionally biased stretch (polar residues) spans 16-25 (EYSYQSQCSP). Positions 50 to 60 (TATSCGSAASG) are enriched in low complexity. Residues 115–443 (DILPERISQG…VQTPPVIVET (329 aa)) enclose the PI3K/PI4K catalytic domain. A G-loop region spans residues 121 to 127 (ISQGSSG). ATP is bound by residues 122–128 (SQGSSGS) and Lys-143. The segment at 148-150 (EPY) is important for substrate binding. The interval 156-169 (KWTKWLQKLCCPCC) is important for interaction with membranes. 4 S-palmitoyl cysteine lipidation sites follow: Cys-165, Cys-166, Cys-168, and Cys-169. 252-255 (QIFV) contributes to the ATP binding site. An important for interaction with membranes region spans residues 259–267 (KDADYWLRR). The interval 296–304 (RNTDRGNDN) is catalytic loop. Residues 334 to 354 (AIDNGLAFPLKHPDSWRAYPF) are activation loop. Asp-336 is an ATP binding site. The tract at residues 349–358 (WRAYPFYWAW) is important for interaction with membranes.

Belongs to the PI3/PI4-kinase family. Type II PI4K subfamily.

Its subcellular location is the golgi apparatus. The protein localises to the trans-Golgi network membrane. It localises to the membrane raft. The protein resides in the endosome. It is found in the endosome membrane. Its subcellular location is the cytoplasmic vesicle. The protein localises to the cell projection. It localises to the dendrite. The protein resides in the presynaptic cell membrane. It is found in the synapse. Its subcellular location is the synaptosome. The protein localises to the mitochondrion. It localises to the membrane. The protein resides in the cell membrane. It is found in the perikaryon. Its subcellular location is the neuron projection. It carries out the reaction a 1,2-diacyl-sn-glycero-3-phospho-(1D-myo-inositol) + ATP = a 1,2-diacyl-sn-glycero-3-phospho-(1D-myo-inositol 4-phosphate) + ADP + H(+). Its function is as follows. Membrane-bound phosphatidylinositol-4 kinase (PI4-kinase) that catalyzes the phosphorylation of phosphatidylinositol (PI) to phosphatidylinositol 4-phosphate (PI4P), a lipid that plays important roles in endocytosis, Golgi function, protein sorting and membrane trafficking. Besides, phosphorylation of phosphatidylinositol (PI) to phosphatidylinositol 4-phosphate (PI4P) is the first committed step in the generation of phosphatidylinositol 4,5-bisphosphate (PIP2), a precursor of the second messenger inositol 1,4,5-trisphosphate (InsP3). This Xenopus laevis (African clawed frog) protein is Phosphatidylinositol 4-kinase type 2-alpha (pi4k2a).